Reading from the N-terminus, the 320-residue chain is GTP 3',8-cyclase (320 aa).

The Radical SAM core domain occupies 5–225; sequence QFGRKINYLR…IQLIKKDEKA (221 aa). Residue R14 coordinates GTP. Residues C21 and C25 each coordinate [4Fe-4S] cluster. Y27 is a binding site for S-adenosyl-L-methionine. C28 lines the [4Fe-4S] cluster pocket. R64 provides a ligand contact to GTP. Residue G68 participates in S-adenosyl-L-methionine binding. T95 lines the GTP pocket. An S-adenosyl-L-methionine-binding site is contributed by S119. K155 serves as a coordination point for GTP. M189 contributes to the S-adenosyl-L-methionine binding site. 2 residues coordinate [4Fe-4S] cluster: C248 and C251. 253–255 provides a ligand contact to GTP; the sequence is RIR. C265 serves as a coordination point for [4Fe-4S] cluster.

It belongs to the radical SAM superfamily. MoaA family. Monomer and homodimer. [4Fe-4S] cluster is required as a cofactor.

It carries out the reaction GTP + AH2 + S-adenosyl-L-methionine = (8S)-3',8-cyclo-7,8-dihydroguanosine 5'-triphosphate + 5'-deoxyadenosine + L-methionine + A + H(+). Its pathway is cofactor biosynthesis; molybdopterin biosynthesis. Functionally, catalyzes the cyclization of GTP to (8S)-3',8-cyclo-7,8-dihydroguanosine 5'-triphosphate. The chain is GTP 3',8-cyclase from Campylobacter jejuni subsp. jejuni serotype O:6 (strain 81116 / NCTC 11828).